The sequence spans 171 residues: Ribosome maturation factor RimP (171 aa).

The protein belongs to the RimP family.

It is found in the cytoplasm. Required for maturation of 30S ribosomal subunits. The polypeptide is Ribosome maturation factor RimP (Anaeromyxobacter dehalogenans (strain 2CP-C)).